We begin with the raw amino-acid sequence, 167 residues long: Protein tyrosine phosphatase type IVA 2 (167 aa).

In terms of domain architecture, Tyrosine-protein phosphatase spans 5 to 158 (APVEISYENM…YRPKMRLRFR (154 aa)). A disulfide bridge connects residues C46 and C101. D69 (proton donor) is an active-site residue. The active-site Phosphocysteine intermediate is the C101. Position 102–107 (102–107 (VAGLGR)) interacts with phosphate. R107 contacts substrate. Cysteine methyl ester is present on C164. C164 carries S-farnesyl cysteine lipidation. A propeptide spans 165 to 167 (CVQ) (removed in mature form).

This sequence belongs to the protein-tyrosine phosphatase family. In terms of assembly, in contrast to PTP4A1 and PTP4A3, does not interact with tubulin. Interacts with RABGGTB. Farnesylated. Farnesylation is required for membrane targeting and for interaction with RABGGTB. As to expression, expressed in skeletal muscle, and at lower levels in liver, lung, heart, kidney, brain, testis and spleen.

The protein localises to the cell membrane. Its subcellular location is the early endosome. It localises to the cytoplasm. The enzyme catalyses O-phospho-L-tyrosyl-[protein] + H2O = L-tyrosyl-[protein] + phosphate. Its activity is regulated as follows. Inhibited by sodium orthovanadate and pentamidine. Protein tyrosine phosphatase which stimulates progression from G1 into S phase during mitosis. Inhibits geranylgeranyl transferase type II activity by blocking the association between RABGGTA and RABGGTB. In Mus musculus (Mouse), this protein is Protein tyrosine phosphatase type IVA 2 (Ptp4a2).